We begin with the raw amino-acid sequence, 115 residues long: Virion-associated protein (115 aa).

Coiled coils occupy residues 1–28 and 33–54; these read MAAT…MLER and KPTG…KIDQ. A compositionally biased stretch (polar residues) spans 96–106; sequence GNEELGSSGNP. The tract at residues 96-115 is disordered; sequence GNEELGSSGNPNAVKWPPRK.

The protein belongs to the caulimovirus ORF III family. As to quaternary structure, homotetramer, through coiled-coil domain. Homotrimer when interacts with icosehadral capsid. Interacts with capsid protein, and with Movement protein.

It localises to the virion. It is found in the host cell junction. The protein localises to the host plasmodesma. In terms of biological role, plays a role in virus cell-to-cell and plant-to-plant transmission. Interacts with virion icosahedral capsid and movement protein, thereby facilitating virion cell-to-cell transmission through plasmodesmata opened by viral movement protein. Also interacts with aphid transmission factor, attaching the virion to aphid stylet when the animal feeds on an virus infected plant. Aphid saliva may later detach the virion, inducing release of infectious particles when the animal feeds on a new plant. This is Virion-associated protein from Scrophularia californica (California bee plant).